A 338-amino-acid polypeptide reads, in one-letter code: 3-dehydroquinate synthase (338 aa).

Belongs to the archaeal-type DHQ synthase family.

The enzyme catalyses 2-amino-2,3,7-trideoxy-D-lyxo-hept-6-ulosonate + NAD(+) + H2O = 3-dehydroquinate + NH4(+) + NADH + H(+). Functionally, catalyzes the oxidative deamination and cyclization of 2-amino-3,7-dideoxy-D-threo-hept-6-ulosonic acid (ADH) to yield 3-dehydroquinate (DHQ), which is fed into the canonical shikimic pathway of aromatic amino acid biosynthesis. In Cenarchaeum symbiosum (strain A), this protein is 3-dehydroquinate synthase.